Consider the following 101-residue polypeptide: Ubiquitin-related modifier 1 homolog 1 (101 aa).

The residue at position 101 (glycine 101) is a 1-thioglycine. Residue glycine 101 forms a Glycyl lysine isopeptide (Gly-Lys) (interchain with K-? in acceptor proteins) linkage.

This sequence belongs to the URM1 family. Post-translationally, C-terminal thiocarboxylation occurs in 2 steps, it is first acyl-adenylated (-COAMP) via the hesA/moeB/thiF part of the MOCS3 homolog, then thiocarboxylated (-COSH) via the rhodanese domain of the MOCS3 homolog.

The protein resides in the cytoplasm. It functions in the pathway tRNA modification; 5-methoxycarbonylmethyl-2-thiouridine-tRNA biosynthesis. Functionally, acts as a sulfur carrier required for 2-thiolation of mcm(5)S(2)U at tRNA wobble positions of cytosolic tRNA(Lys), tRNA(Glu) and tRNA(Gln). Serves as sulfur donor in tRNA 2-thiolation reaction by being thiocarboxylated (-COSH) at its C-terminus by MOCS3. The sulfur is then transferred to tRNA to form 2-thiolation of mcm(5)S(2)U. Also acts as a ubiquitin-like protein (UBL) that is covalently conjugated via an isopeptide bond to lysine residues of target proteins. The thiocarboxylated form serves as substrate for conjugation and oxidative stress specifically induces the formation of UBL-protein conjugates. This is Ubiquitin-related modifier 1 homolog 1 from Arabidopsis thaliana (Mouse-ear cress).